The primary structure comprises 556 residues: MAGGAREVLTLQLGHFAGFVGAHWWNQQDAALGRMAEDEESPGELCPDVLYRTGRTLHGQETYTPRLILMDLKGSLNTLKEEGNLYRDRQLEAAVAWQGKLSTHREDAHPKNPNLQGLLSAEGVRSSDGAWRAKLIQNIQNGKENSIKVWSDFLRVHLHPRSICVIHKYHHDGETGRLEAFGQGESVLKEPRYLEELEDRLHFYVEECDYLQGFQLLCDLHDGFSGVGAKTAELLQDEYAGRGVLTWGLLPGPYSLGEPQKNIYRLLNTAFGLVHLTGYSSFVCPLSLGGNLGLRPKPPVNFPSLHYDATLPFHCSAILATALDTVTVPYRLRSSMVTMAHLADVLSFSGKKVVTAEAIIPFPLVRGQSLPDILTQLGEATPWTSLSACGDSAGHRCFAQSVVLRGIDRASHTSKLNPGTPLPSALHACASGEEVLAQYLQQQHPRVLSSSHLLLTPCKVAPPYPHFFSSFSQKGLAMDSTPKGAAVQSIPVFGALRSTSSLHRTLGDLAEELSRLDLRRWASFMDAGVEQDDMEEMLHELHRLAQCYQEGDSLSN.

A Phosphoserine modification is found at S41.

This sequence belongs to the misato family.

Its subcellular location is the mitochondrion outer membrane. The protein resides in the cytoplasm. Involved in the regulation of mitochondrial distribution and morphology. Required for mitochondrial fusion and mitochondrial network formation. This is Protein misato homolog 1 (Msto1) from Mus musculus (Mouse).